We begin with the raw amino-acid sequence, 170 residues long: Photosystem I assembly protein Ycf3 (170 aa).

TPR repeat units lie at residues 35-68 (AFTY…EIDP), 72-105 (SYIL…NPFL), and 120-153 (GEQA…TPGN).

The protein belongs to the Ycf3 family.

It is found in the plastid. Its subcellular location is the chloroplast thylakoid membrane. Functionally, essential for the assembly of the photosystem I (PSI) complex. May act as a chaperone-like factor to guide the assembly of the PSI subunits. In Zea mays (Maize), this protein is Photosystem I assembly protein Ycf3.